The primary structure comprises 363 residues: 3-isopropylmalate dehydrogenase (363 aa).

Residue 78-89 (GPKWGTGAVRPE) participates in NAD(+) binding. Residues Arg-96, Arg-106, Arg-135, and Asp-224 each coordinate substrate. Positions 224, 249, and 253 each coordinate Mg(2+). 288–299 (GSAPDLPANKVN) contacts NAD(+).

Belongs to the isocitrate and isopropylmalate dehydrogenases family. As to quaternary structure, homodimer. Requires Mg(2+) as cofactor. The cofactor is Mn(2+).

The protein localises to the cytoplasm. It catalyses the reaction (2R,3S)-3-isopropylmalate + NAD(+) = 4-methyl-2-oxopentanoate + CO2 + NADH. The protein operates within amino-acid biosynthesis; L-leucine biosynthesis; L-leucine from 3-methyl-2-oxobutanoate: step 3/4. Catalyzes the oxidation of 3-carboxy-2-hydroxy-4-methylpentanoate (3-isopropylmalate) to 3-carboxy-4-methyl-2-oxopentanoate. The product decarboxylates to 4-methyl-2 oxopentanoate. The polypeptide is 3-isopropylmalate dehydrogenase (LEU2) (Cyberlindnera jadinii (Torula yeast)).